The sequence spans 374 residues: DNA integrity scanning protein DisA (374 aa).

One can recognise a DAC domain in the interval Asp-20 to Ser-158. ATP is bound by residues Gly-87, Leu-105, and Thr-118 to Thr-122.

This sequence belongs to the DisA family. Homooctamer. The cofactor is Mg(2+).

The catalysed reaction is 2 ATP = 3',3'-c-di-AMP + 2 diphosphate. Functionally, participates in a DNA-damage check-point that is active prior to asymmetric division when DNA is damaged. DisA forms globular foci that rapidly scan along the chromosomes during sporulation, searching for lesions. When a lesion is present, DisA pauses at the lesion site. This triggers a cellular response that culminates in a temporary block in sporulation initiation. In terms of biological role, also has diadenylate cyclase activity, catalyzing the condensation of 2 ATP molecules into cyclic di-AMP (c-di-AMP). c-di-AMP acts as a signaling molecule that couples DNA integrity with progression of sporulation. The rise in c-di-AMP level generated by DisA while scanning the chromosome, operates as a positive signal that advances sporulation; upon encountering a lesion, the DisA focus arrests at the damaged site and halts c-di-AMP synthesis. In Streptomyces avermitilis (strain ATCC 31267 / DSM 46492 / JCM 5070 / NBRC 14893 / NCIMB 12804 / NRRL 8165 / MA-4680), this protein is DNA integrity scanning protein DisA.